A 118-amino-acid polypeptide reads, in one-letter code: Probable FK506-binding protein (118 aa).

One can recognise a PPIase FKBP-type domain in the interval 33-118 (GGEVEVHYVG…LVFIIDLISA (86 aa)).

The protein belongs to the FKBP-type PPIase family.

It catalyses the reaction [protein]-peptidylproline (omega=180) = [protein]-peptidylproline (omega=0). In terms of biological role, PPIases accelerate the folding of proteins. In Corynebacterium glutamicum (strain ATCC 13032 / DSM 20300 / JCM 1318 / BCRC 11384 / CCUG 27702 / LMG 3730 / NBRC 12168 / NCIMB 10025 / NRRL B-2784 / 534), this protein is Probable FK506-binding protein.